Reading from the N-terminus, the 77-residue chain is Tachyplesin-1 (77 aa).

Positions 1-23 (MKKLVIALCLMMVLAVMVEEAEA) are cleaved as a signal peptide. Intrachain disulfides connect C26–C39 and C30–C35. R40 carries the post-translational modification Arginine amide. Positions 41 to 77 (GKRNEVRQYRDRGYDVRAIPEETFFTRQDEDEDDDEE) are excised as a propeptide.

The protein belongs to the tachyplesin/polyphemusin family. Hemocytes.

The protein localises to the secreted. Significantly inhibits the growth of Gram-negative and Gram-positive bacteria. The sequence is that of Tachyplesin-1 from Tachypleus tridentatus (Japanese horseshoe crab).